The following is a 63-amino-acid chain: Large ribosomal subunit protein uL29 (63 aa).

Belongs to the universal ribosomal protein uL29 family.

In Photorhabdus laumondii subsp. laumondii (strain DSM 15139 / CIP 105565 / TT01) (Photorhabdus luminescens subsp. laumondii), this protein is Large ribosomal subunit protein uL29.